A 163-amino-acid chain; its full sequence is Putative ribose 5-phosphate isomerase (163 aa).

Asp16–Asp17 provides a ligand contact to D-ribulose 5-phosphate. Cys76 (proton acceptor) is an active-site residue. D-ribulose 5-phosphate contacts are provided by residues Gly77–Gly81, Asn110, Arg120, and Lys148.

The protein belongs to the LacAB/RpiB family. Homodimer or homotetramer.

The chain is Putative ribose 5-phosphate isomerase from Coccidioides immitis (strain RS) (Valley fever fungus).